The sequence spans 240 residues: EF-hand domain-containing protein D1 (240 aa).

Positions 17–54 (EVRAETDQGDPQPAPCDAPAGHPEPEPPARAPTASADS) are disordered. 2 consecutive EF-hand domains span residues 91 to 126 (RLLKDLEKMFKTYDAGRDGFIDLMELKLMMEKLGAP) and 127 to 162 (QTHLGLKSMIKEVDEDFDGKLSFREFLLIFHKAAAG). Residues Asp104, Asp108, Glu115, Asp140, Asp142, Asp144, Lys146, and Glu151 each coordinate Ca(2+).

In terms of tissue distribution, widely expressed. Highest expression in testis, followed by ovary, kidney, cerebrum, cerebellum, heart, liver, and spleen. In the cerebrum and cerebellum, undetectable at embryonic stages, expression increases after birth up to adult stage. In adult CNS, detected in neurons of the cerebellum, cerebrum and hippocampus formation, including dentate gyrus and Cornu Ammonis, but not in the white matter. In the testis, expressed in spermatocytes, but not in spermatogonia nor in interstitial cells. In ovary, found predominantly in mural granulosa cells and those of the cumulus oophorus. In kidney, expressed in collecting ducts, but not in glomeruli. Not detected in skeletal muscle.

The protein resides in the mitochondrion inner membrane. Acts as a calcium sensor for mitochondrial flash (mitoflash) activation, an event characterized by stochastic bursts of superoxide production. May play a role in neuronal differentiation. The chain is EF-hand domain-containing protein D1 (Efhd1) from Mus musculus (Mouse).